The primary structure comprises 95 residues: Aspartyl/glutamyl-tRNA(Asn/Gln) amidotransferase subunit C (95 aa).

The protein belongs to the GatC family. As to quaternary structure, heterotrimer of A, B and C subunits.

It catalyses the reaction L-glutamyl-tRNA(Gln) + L-glutamine + ATP + H2O = L-glutaminyl-tRNA(Gln) + L-glutamate + ADP + phosphate + H(+). The catalysed reaction is L-aspartyl-tRNA(Asn) + L-glutamine + ATP + H2O = L-asparaginyl-tRNA(Asn) + L-glutamate + ADP + phosphate + 2 H(+). Functionally, allows the formation of correctly charged Asn-tRNA(Asn) or Gln-tRNA(Gln) through the transamidation of misacylated Asp-tRNA(Asn) or Glu-tRNA(Gln) in organisms which lack either or both of asparaginyl-tRNA or glutaminyl-tRNA synthetases. The reaction takes place in the presence of glutamine and ATP through an activated phospho-Asp-tRNA(Asn) or phospho-Glu-tRNA(Gln). This Nitrosococcus oceani (strain ATCC 19707 / BCRC 17464 / JCM 30415 / NCIMB 11848 / C-107) protein is Aspartyl/glutamyl-tRNA(Asn/Gln) amidotransferase subunit C.